The primary structure comprises 238 residues: Survival of motor neuron-related-splicing factor 30 (238 aa).

Positions 72 to 132 (SWKVGDKCMA…KPVEEGRKAK (61 aa)) constitute a Tudor domain. The Nuclear localization signal signature appears at 142–160 (KKEMIAQQREYKKKKALKK). Serine 201 is modified (phosphoserine). Residue lysine 219 is modified to N6-acetyllysine.

This sequence belongs to the SMN family. As to quaternary structure, associates with spliceosomes. Associates with U4/U5/U6 tri-snRNP and with U2 snRNP.

It localises to the nucleus speckle. Its subcellular location is the nucleus. The protein localises to the cajal body. In terms of biological role, involved in spliceosome assembly. The sequence is that of Survival of motor neuron-related-splicing factor 30 (Smndc1) from Mus musculus (Mouse).